A 461-amino-acid chain; its full sequence is GTPase Der (461 aa).

2 consecutive EngA-type G domains span residues 9 to 171 (KTIA…NLNK) and 200 to 371 (IQVG…ECFS). Residues 15-22 (GQPNVGKS), 62-66 (DTGGM), 123-126 (NKID), 206-213 (GRVNVGKS), 253-257 (DTAGI), and 317-320 (NKWD) contribute to the GTP site. The KH-like domain occupies 372-456 (KRIPTSLLNS…PLILNAKDKK (85 aa)).

Belongs to the TRAFAC class TrmE-Era-EngA-EngB-Septin-like GTPase superfamily. EngA (Der) GTPase family. As to quaternary structure, associates with the 50S ribosomal subunit.

GTPase that plays an essential role in the late steps of ribosome biogenesis. The chain is GTPase Der from Helicobacter pylori (strain HPAG1).